Consider the following 366-residue polypeptide: Chorismate synthase (366 aa).

2 residues coordinate NADP(+): arginine 48 and arginine 54. Residues 125–127 (RSS), 241–242 (NA), glycine 285, 300–304 (KPTSS), and arginine 326 each bind FMN.

This sequence belongs to the chorismate synthase family. As to quaternary structure, homotetramer. The cofactor is FMNH2.

The catalysed reaction is 5-O-(1-carboxyvinyl)-3-phosphoshikimate = chorismate + phosphate. Its pathway is metabolic intermediate biosynthesis; chorismate biosynthesis; chorismate from D-erythrose 4-phosphate and phosphoenolpyruvate: step 7/7. Its function is as follows. Catalyzes the anti-1,4-elimination of the C-3 phosphate and the C-6 proR hydrogen from 5-enolpyruvylshikimate-3-phosphate (EPSP) to yield chorismate, which is the branch point compound that serves as the starting substrate for the three terminal pathways of aromatic amino acid biosynthesis. This reaction introduces a second double bond into the aromatic ring system. This is Chorismate synthase from Cereibacter sphaeroides (strain ATCC 17029 / ATH 2.4.9) (Rhodobacter sphaeroides).